A 230-amino-acid polypeptide reads, in one-letter code: Ethylene-responsive transcription factor ERF012 (230 aa).

A compositionally biased stretch (basic and acidic residues) spans M1–M17. Positions M1–K51 are disordered. Residues S20–K39 show a composition bias toward low complexity. Residues N40–K51 are compositionally biased toward basic residues. A DNA-binding region (AP2/ERF) is located at residues K49–P106.

Belongs to the AP2/ERF transcription factor family. ERF subfamily. As to expression, expressed cotyledons, ovules and seeds of immature siliques.

It localises to the nucleus. Its function is as follows. Transcriptional activator involved in the regulation of plant development and tolerance to abiotic stresses. Involved in salt and osmotic stress response pathways. May be regulated by the stress-related genes RD29A, RD22, DREB1A or P5CS during stress response. Binds to the GCC-box pathogenesis-related promoter element. May be involved in the regulation of gene expression by stress factors and by components of stress signal transduction pathways. The protein is Ethylene-responsive transcription factor ERF012 (ERF012) of Arabidopsis thaliana (Mouse-ear cress).